We begin with the raw amino-acid sequence, 375 residues long: Trans-enoyl reductase cghC (375 aa).

48–51 (VDTK) is an NADP(+) binding site. 135 to 142 (NAWYTSGW) is a binding site for substrate. NADP(+) contacts are provided by residues 188-191 (SSST), 211-214 (SARN), and 276-277 (LD). A substrate-binding site is contributed by 297–301 (GPELV). 366 to 367 (VS) is an NADP(+) binding site.

The protein belongs to the zinc-containing alcohol dehydrogenase family. Monomer.

The enzyme catalyses (2S,4S)-4-hydroxy-4-methylglutamate + 8 malonyl-CoA + 3 S-adenosyl-L-methionine + ATP + 8 NADPH + 11 H(+) = (2S)-3-[(2S)-3,5-dioxo-4-[(2E,4R,6R,8E,10E,12E)-4,6,12-trimethyltetradeca-2,8,10,12-tetraenoyl]pyrrolidin-2-yl]-2-hydroxy-2-methylpropanoate + AMP + 3 S-adenosyl-L-homocysteine + 8 CO2 + diphosphate + 8 NADP(+) + 8 CoA + 6 H2O. Its pathway is secondary metabolite biosynthesis. In terms of biological role, trans-enoyl reductase; part of the gene cluster that mediates the biosynthesis of the tetramic acid Sch210972, a potential anti-HIV fungal natural product that contains a decalin core. The PKS module of cghG together with the enoylreductase cghC catalyze the formation of the polyketide unit which is then conjugated to 4-hydroxyl-4-methyl glutamate (HMG) by the condensation domain of the cghG NRPS module. One unique structural feature of Sch210972 is the tetramic acid motif proposed to be derived from the non-proteinogenic amino acid HMG, by a Dieckmann-type condensation catalyzed by the reductase domain of cghG. The aldolase cghB catalyzes the aldol condensation of 2 molecules of pyruvic acid to yield the intermediate 4-hydroxyl-4-methyl-2-oxoglutarate (HMOG), which can then be stereoselectively transaminated by an unidentified enzyme to form HMG. The Diels-Alderase cghA then uses the Dieckmann product released by cghG as substrate and catalyzes the Diels-Alder cycloaddition to form the decalin ring of Sch210972. CghA also suppresses the nonenzymatic formation of the alternative stereoisomer. In Chaetomium globosum (strain ATCC 6205 / CBS 148.51 / DSM 1962 / NBRC 6347 / NRRL 1970) (Soil fungus), this protein is Trans-enoyl reductase cghC.